We begin with the raw amino-acid sequence, 384 residues long: Outer membrane protein assembly factor BamC (384 aa).

The signal sequence occupies residues 1–23 (MNKLNSVVVARGAVAVLLIGLAG). Residue Cys-24 is the site of N-palmitoyl cysteine attachment. Residue Cys-24 is the site of S-diacylglycerol cysteine attachment. Disordered stretches follow at residues 47 to 70 (LEVP…TSGK) and 251 to 273 (QAAQ…SGTL).

It belongs to the BamC family. As to quaternary structure, part of the Bam complex.

Its subcellular location is the cell outer membrane. Part of the outer membrane protein assembly complex, which is involved in assembly and insertion of beta-barrel proteins into the outer membrane. This is Outer membrane protein assembly factor BamC from Accumulibacter regalis.